The sequence spans 391 residues: Histamine H4 receptor (391 aa).

Residues 1-19 (MSESNSTGILPPAAQVPLA) are Extracellular-facing. An N-linked (GlcNAc...) asparagine glycan is attached at N5. A helical membrane pass occupies residues 20-40 (FLMSSFAFAIMVGNAVVILAF). Residues 41–52 (VVDRNLRHRSNY) are Cytoplasmic-facing. A helical membrane pass occupies residues 53–73 (FFLNLAISDFLVGLISIPLYI). Over 74–87 (PHVLFNWNFGSGIC) the chain is Extracellular. Cysteines 87 and 166 form a disulfide. The chain crosses the membrane as a helical span at residues 88–108 (MFWLITDYLLCTASVYNIVLI). Residues 109 to 131 (SYDRYQSVSNAVSYRAQHTGIMK) lie on the Cytoplasmic side of the membrane. A helical transmembrane segment spans residues 132 to 152 (IVAQMVAVWILAFLVNGPMIL). Topologically, residues 153-174 (ASDSWKNSTNTKDCEPGFVTEW) are extracellular. A glycan (N-linked (GlcNAc...) asparagine) is linked at N159. The helical transmembrane segment at 175–195 (YILTITMLLEFLLPVISVAYF) threads the bilayer. At 196–306 (NVQIYWSLWK…LLRGRKLARS (111 aa)) the chain is on the cytoplasmic side. The segment at 238–258 (TSNPGLKESAASRHSESPRRK) is disordered. A compositionally biased stretch (basic and acidic residues) spans 247–256 (AASRHSESPR). The chain crosses the membrane as a helical span at residues 307-327 (LAILLSAFAICWAPYCLFTIV). At 328–343 (LSTYPRTERPKSVWYS) the chain is on the extracellular side. A helical transmembrane segment spans residues 344-364 (IAFWLQWFNSFVNPFLYPLCH). The Cytoplasmic segment spans residues 365 to 391 (RRFQKAFWKILCVTKQPALSQNQSVSS).

This sequence belongs to the G-protein coupled receptor 1 family. Interacts with TSPAN4.

It is found in the cell membrane. Its function is as follows. The H4 subclass of histamine receptors could mediate the histamine signals in peripheral tissues. Displays a significant level of constitutive activity (spontaneous activity in the absence of agonist). The protein is Histamine H4 receptor (Hrh4) of Mus musculus (Mouse).